We begin with the raw amino-acid sequence, 70 residues long: Large ribosomal subunit protein bL31 (70 aa).

Zn(2+) contacts are provided by C16, C18, C37, and C40.

Belongs to the bacterial ribosomal protein bL31 family. Type A subfamily. As to quaternary structure, part of the 50S ribosomal subunit. Zn(2+) is required as a cofactor.

Its function is as follows. Binds the 23S rRNA. In Pasteurella multocida (strain Pm70), this protein is Large ribosomal subunit protein bL31.